Consider the following 219-residue polypeptide: Glucagon-2 (219 aa).

The signal sequence occupies residues 1 to 20 (MKSTCYMIGILLLILQNTYQ). 5 propeptides span residues 21–50 (SPVP…LKEV), 84–95 (SGGLSRRNADYE), 136–140 (NAEIE), 175–178 (IRYS), and 213–219 (KDLLEEH). Residues 23-43 (VPEADGSSRSVKAARNEAVDD) are disordered.

Belongs to the glucagon family.

The protein localises to the secreted. In terms of biological role, promotes hydrolysis of glycogen and lipids, and raises the blood sugar level. The chain is Glucagon-2 (gcg2) from Xenopus laevis (African clawed frog).